A 411-amino-acid polypeptide reads, in one-letter code: Dihydrosphingosine 1-phosphate phosphatase C823.11 (411 aa).

Residues 1 to 74 (MVHKKKNVDI…LDVYFMYTAT (74 aa)) lie on the Lumenal side of the membrane. The helical transmembrane segment at 75–95 (LGTHVFFMLALPIFFWSGCIY) threads the bilayer. At 96–99 (YTLD) the chain is on the cytoplasmic side. A helical membrane pass occupies residues 100–120 (ITQLFAAGVYFSGCIKDYFCL). The phosphatase sequence motif I stretch occupies residues 115 to 123 (KDYFCLPRP). Topologically, residues 121-170 (PRPRSPPMVRLTLSSDAEYEYGFPSTHTTNAMATGFYSLFLLLSMSDSMS) are lumenal. The segment at 144–147 (PSTH) is phosphatase sequence motif II. The active-site Proton donor is H147. A helical transmembrane segment spans residues 171–191 (SISYYFLLSLVLLYIASISLG). The phosphatase sequence motif III stretch occupies residues 191 to 202 (GRIYCGMHGFMD). The Cytoplasmic portion of the chain corresponds to 192 to 195 (RIYC). The chain crosses the membrane as a helical span at residues 196 to 216 (GMHGFMDVSTGTILGVTLAIF). H198 (nucleophile) is an active-site residue. Residues 217 to 233 (QWKYADFFHNVWSSSST) lie on the Lumenal side of the membrane. A helical transmembrane segment spans residues 234–254 (SVPILSVVLALFFIWFHPQPA). At 255-259 (ERCIC) the chain is on the cytoplasmic side. Residues 260–280 (LEDSISFISVIMGIDLGTWFA) traverse the membrane as a helical segment. Over 281-293 (SPESLSHLHDNLN) the chain is Lumenal. Residues 294-314 (SYFLLKFFVRVLFGVCMILIW) form a helical membrane-spanning segment. The Cytoplasmic portion of the chain corresponds to 315–387 (KSFAKQALLA…VRFDIETIAR (73 aa)). Residues 388 to 408 (IIVYSGIGFLCTYFAPKVFLK) traverse the membrane as a helical segment. Over 409–411 (WKI) the chain is Lumenal.

The protein belongs to the type 2 lipid phosphate phosphatase family.

It localises to the endoplasmic reticulum membrane. Functionally, dihydrosphingosine 1-phosphate phosphatase required for efficient ceramide synthesis from exogenous sphingoid bases. Involved in endocytosis and calcium-mediated signaling. The sequence is that of Dihydrosphingosine 1-phosphate phosphatase C823.11 from Schizosaccharomyces pombe (strain 972 / ATCC 24843) (Fission yeast).